Reading from the N-terminus, the 222-residue chain is 4'-phosphopantetheinyl transferase Npt (222 aa).

Residues aspartate 105, glutamate 107, and glutamate 147 each coordinate Mg(2+).

Belongs to the P-Pant transferase superfamily. Monomer. Mg(2+) serves as cofactor.

It carries out the reaction apo-[ACP] + CoA = holo-[ACP] + adenosine 3',5'-bisphosphate + H(+). Functionally, catalyzes the transfer of the 4'-phosphopantetheine moiety from coenzyme A to a serine residue in the acyl-carrier domain of carboxylic acid reductase Car, thus converting apo-Car to fully active holo-Car. Is probably also responsible for the activation of other proteins with phosphopantetheine attachment sites. This Nocardia iowensis protein is 4'-phosphopantetheinyl transferase Npt (npt).